The sequence spans 201 residues: Ribonuclease HII (201 aa).

Positions 10–200 (LIEAGCDEAG…LGTDPQLEIP (191 aa)) constitute an RNase H type-2 domain. A divalent metal cation contacts are provided by Asp-16, Glu-17, and Asp-108.

The protein belongs to the RNase HII family. Mn(2+) serves as cofactor. It depends on Mg(2+) as a cofactor.

It is found in the cytoplasm. It catalyses the reaction Endonucleolytic cleavage to 5'-phosphomonoester.. Its function is as follows. Endonuclease that specifically degrades the RNA of RNA-DNA hybrids. The protein is Ribonuclease HII of Phocaeicola vulgatus (strain ATCC 8482 / DSM 1447 / JCM 5826 / CCUG 4940 / NBRC 14291 / NCTC 11154) (Bacteroides vulgatus).